A 102-amino-acid polypeptide reads, in one-letter code: Small ubiquitin-related modifier 1-A (102 aa).

A disordered region spans residues 1-20 (MSDQEAKPSSEDLGDKKDGG). The 78-residue stretch at 21–98 (DYIKLKVIGQ…IEVYQEQTGG (78 aa)) folds into the Ubiquitin-like domain. A Glycyl lysine isopeptide (Gly-Lys) (interchain with K-? in acceptor proteins) cross-link involves residue Gly-98. A propeptide spanning residues 99–102 (HSTF) is cleaved from the precursor.

It belongs to the ubiquitin family. SUMO subfamily. As to quaternary structure, interacts with sae2, ube2i, ranbp2, pias1 and pias2. Covalently attached to a number of proteins including rangap1 and ranbp2. Interacts with sox9 and sox10. In terms of processing, cleavage of precursor form by a sentrin-specific protease is necessary for function.

It localises to the nucleus membrane. Its subcellular location is the nucleus speckle. It is found in the cytoplasm. The protein resides in the nucleus. The protein localises to the PML body. It localises to the cell membrane. Ubiquitin-like protein that can be covalently attached to proteins as a monomer or a lysine-linked polymer. Covalent attachment via an isopeptide bond to its substrates requires prior activation by the E1 complex sae1-sae2 and linkage to the E2 enzyme ube2i. This post-translational modification on lysine residues of proteins plays a crucial role in a number of cellular processes such as nuclear transport, DNA replication and repair, mitosis and signal transduction. Polymeric sumo1 chains are also susceptible to polyubiquitination which functions as a signal for proteasomal degradation of modified proteins. The chain is Small ubiquitin-related modifier 1-A (sumo1-a) from Xenopus laevis (African clawed frog).